Here is a 405-residue protein sequence, read N- to C-terminus: uncharacterized protein (405 aa).

Transmembrane regions (helical) follow at residues 32–52, 53–73, 84–104, 108–128, 150–170, 171–191, 237–257, 260–280, 291–311, 314–334, 352–372, and 378–398; these read MFVL…VLAG, WLTF…GVLL, IDMI…WLGW, PVVC…IAGI, AVYS…VGWL, GPEA…VCLS, WGAL…VAAG, VVGL…LLAG, IMTA…AEFG, GLTI…VAML, ISIS…GVVI, and AIFV…LSIP.

This sequence belongs to the major facilitator superfamily.

It is found in the cell membrane. This is an uncharacterized protein from Sinorhizobium fredii (strain NBRC 101917 / NGR234).